A 497-amino-acid polypeptide reads, in one-letter code: C4-dicarboxylate transport protein (497 aa).

8 consecutive transmembrane segments (helical) span residues 27-45 (LYVQVLAAIAVGILLGYFY), 60-82 (IMLVKMIIAPVIFLTVATGIAGM), 95-117 (AMIYFLTFSTLALLVGLVVANVV), 168-185 (ILQVLFISVLFGISLAIV), 205-227 (RLVAILMKAAPIGAFGAMAFTIG), 237-259 (LAMLIGTFYLTSFLFVFMVLGAV), 348-370 (ILLLLIAMLSSKGAAGITGAGFI), and 374-393 (ATLSAVPSVPVAGMALILGI). The segment at 466 to 497 (ADRTLAGRPGGRDSRRIAPDHSAQVFGGPLSL) is disordered. A compositionally biased stretch (basic and acidic residues) spans 475–484 (GGRDSRRIAP).

Belongs to the dicarboxylate/amino acid:cation symporter (DAACS) (TC 2.A.23) family.

It is found in the cell inner membrane. Functionally, responsible for the transport of dicarboxylates such as succinate, fumarate, and malate from the periplasm across the inner membrane. This transport system plays an essential role in the energy supply of tropical rhizobium-legume symbionts. The sequence is that of C4-dicarboxylate transport protein (dctA1) from Sinorhizobium fredii (strain NBRC 101917 / NGR234).